The sequence spans 160 residues: Transcription elongation factor GreA (160 aa).

The stretch at 49-75 forms a coiled coil; it reads SEYDEAKNDQAFTEGRIIQLENMLKNA.

Belongs to the GreA/GreB family.

Necessary for efficient RNA polymerase transcription elongation past template-encoded arresting sites. The arresting sites in DNA have the property of trapping a certain fraction of elongating RNA polymerases that pass through, resulting in locked ternary complexes. Cleavage of the nascent transcript by cleavage factors such as GreA or GreB allows the resumption of elongation from the new 3'terminus. GreA releases sequences of 2 to 3 nucleotides. In Clostridium beijerinckii (strain ATCC 51743 / NCIMB 8052) (Clostridium acetobutylicum), this protein is Transcription elongation factor GreA.